The primary structure comprises 313 residues: Ribosomal RNA small subunit methyltransferase H (313 aa).

Residues 35 to 37 (GGH), Asp55, Phe79, Asp101, and Gln108 contribute to the S-adenosyl-L-methionine site.

This sequence belongs to the methyltransferase superfamily. RsmH family.

It is found in the cytoplasm. It catalyses the reaction cytidine(1402) in 16S rRNA + S-adenosyl-L-methionine = N(4)-methylcytidine(1402) in 16S rRNA + S-adenosyl-L-homocysteine + H(+). Specifically methylates the N4 position of cytidine in position 1402 (C1402) of 16S rRNA. The chain is Ribosomal RNA small subunit methyltransferase H from Erwinia tasmaniensis (strain DSM 17950 / CFBP 7177 / CIP 109463 / NCPPB 4357 / Et1/99).